The chain runs to 64 residues: Large ribosomal subunit protein uL30 (64 aa).

Part of the 50S ribosomal subunit. The protein is methylated on either Ala-2 or Lys-3.

The sequence is that of Large ribosomal subunit protein uL30 from Rhodopseudomonas palustris (strain ATCC BAA-98 / CGA009).